We begin with the raw amino-acid sequence, 394 residues long: Xylose isomerase (394 aa).

Residues His-54 and Asp-57 contribute to the active site. Residues Glu-180, Glu-216, His-219, Asp-244, Asp-254, Asp-256, and Asp-285 each contribute to the Mg(2+) site. Positions 370-394 (VRTPRPAGDGPPAGRARLTVAPRKR) are disordered. Residues 373–386 (PRPAGDGPPAGRAR) show a composition bias toward low complexity.

Belongs to the xylose isomerase family. Homotetramer. Mg(2+) serves as cofactor.

The protein resides in the cytoplasm. It catalyses the reaction alpha-D-xylose = alpha-D-xylulofuranose. In terms of biological role, involved in D-xylose catabolism. This chain is Xylose isomerase (xylA), found in Streptomyces rochei (Streptomyces parvullus).